Consider the following 257-residue polypeptide: Ribosome-associated protein quality control protein P2 (257 aa).

Residues Met1–Phe74 are N-terminal domain. The segment at Leu87 to Ile166 is central region. Positions Leu181–Val251 constitute an S4 RNA-binding domain.

In the presence of chloramphenicol (a translation elongation inhibitor), but not erythromycin or lincomycin, associates with 50S ribosomal subunits with or without a tRNA in the P-site. The S4 domain binds in a similar position to RqcP.

It localises to the cytoplasm. Part of the ribosome quality control system (RQC), a ribosome-associated complex that mediates the extraction of incompletely synthesized nascent chains from stalled ribosomes and their subsequent degradation. RqcH recruits Ala-charged tRNA, and with RqcP directs the elongation of stalled nascent chains on 50S ribosomal subunits, leading to non-templated C-terminal alanine extensions (Ala tail). The Ala tail promotes nascent chain degradation. RqcP2 (YlmH) overexpression can compensate for RqcP's role in Ala tailing during RQC, restoring Ala tail addition to peptides in stalled ribosomes. Overexpression complements a double ssrA-rqcP double deletion, but not an ssrA-rqcH double deletion. Functionally, the majority of tagged protein is associated with tRNA-less 50S subunits, suggesting it might also play a role in late stage 50S subunit biogenesis. This chain is Ribosome-associated protein quality control protein P2, found in Bacillus subtilis (strain 168).